Consider the following 191-residue polypeptide: Putative resolvase L103 (191 aa).

A DNA-binding region (H-T-H motif) is located at residues 11-30 (LEVLKVHYQTLYRMEEKGLI). One can recognise a Resolvase/invertase-type recombinase catalytic domain in the interval 59 to 191 (KGICYCRVSS…KKSGKLKAKK (133 aa)). The stretch at 65–91 (RVSSKKQIKDLNRQVEYMEKNYPEYEI) forms a coiled coil. The active-site O-(5'-phospho-DNA)-serine intermediate is the Ser67.

Belongs to the site-specific recombinase resolvase family.

Resolvase catalyzes the resolution (a site-specific recombination) of the cointegrated replicon to yield the final transposition products. This is Putative resolvase L103 from Acanthamoeba polyphaga (Amoeba).